The following is a 647-amino-acid chain: Threonine--tRNA ligase (647 aa).

One can recognise a TGS domain in the interval 1–61; the sequence is MIKITFPDGA…EEDGSIEIVT (61 aa). The catalytic stretch occupies residues 240–538; sequence DHRKLGKELD…LIETYKGAFP (299 aa). Zn(2+)-binding residues include C334, H385, and H515.

Belongs to the class-II aminoacyl-tRNA synthetase family. In terms of assembly, homodimer. Zn(2+) serves as cofactor.

It localises to the cytoplasm. The enzyme catalyses tRNA(Thr) + L-threonine + ATP = L-threonyl-tRNA(Thr) + AMP + diphosphate + H(+). In terms of biological role, catalyzes the attachment of threonine to tRNA(Thr) in a two-step reaction: L-threonine is first activated by ATP to form Thr-AMP and then transferred to the acceptor end of tRNA(Thr). Also edits incorrectly charged L-seryl-tRNA(Thr). This Streptococcus pyogenes serotype M49 (strain NZ131) protein is Threonine--tRNA ligase.